The primary structure comprises 89 residues: MATVIAKVKVMPTSPEVDKESLKATLKELVENNDAKCRGVSDEPLAFGLYTVFVMVEMEEKEGGMDPIEEAMNALENVESAEVVELSLV.

The protein belongs to the EF-1-beta/EF-1-delta family.

Its function is as follows. Promotes the exchange of GDP for GTP in EF-1-alpha/GDP, thus allowing the regeneration of EF-1-alpha/GTP that could then be used to form the ternary complex EF-1-alpha/GTP/AAtRNA. The protein is Elongation factor 1-beta of Methanococcus maripaludis (strain C7 / ATCC BAA-1331).